Here is a 406-residue protein sequence, read N- to C-terminus: Peptide antibiotic transporter SbmA (406 aa).

The Periplasmic portion of the chain corresponds to 1 to 11 (MFKSFFPKPGT). Residues 12–32 (FFLSAFVWALIAVIFWQAGGG) form a helical membrane-spanning segment. Topologically, residues 33–56 (DWVARITGASGQIPISAARFWSLD) are cytoplasmic. Residues 57–77 (FLIFYAYYIVCVGLFALFWFI) traverse the membrane as a helical segment. The Periplasmic segment spans residues 78–87 (YSPHRWQYWS). Residues 88-108 (ILGTALIIFVTWFLVEVGVAV) traverse the membrane as a helical segment. The Cytoplasmic segment spans residues 109–137 (NAWYAPFYDLIQTALSSPHKVTIEQFYRE). Residues 138–158 (VGVFLGIALIAVVISVLNNFF) traverse the membrane as a helical segment. Over 159–205 (VSHYVFRWRTAMNEYYMANWQQLRHIEGAAQRVQEDTMRFASTLENM) the chain is Periplasmic. A helical membrane pass occupies residues 206-226 (GVSFINAIMTLIAFLPVLVTL). The Cytoplasmic segment spans residues 227 to 242 (SAHVPELPIIGHIPYG). The helical transmembrane segment at 243 to 263 (LVIAAIVWSLMGTGLLAVVGI) threads the bilayer. Topologically, residues 264 to 331 (KLPGLEFKNQ…ARILYLQVDN (68 aa)) are periplasmic. A helical transmembrane segment spans residues 332–352 (VFGLFLLFPSIVAGTITLGLM). At 353–406 (TQITNVFGQVRGAFQYLINSWTTLVELMSIYKRLRSFEHELDGDKIQEVTHTLS) the chain is on the cytoplasmic side.

Belongs to the peptide uptake permease (PUP) (TC 9.A.18) family.

It is found in the cell inner membrane. Uptake of antimicrobial peptides. The protein is Peptide antibiotic transporter SbmA (sbmA) of Escherichia coli O157:H7.